A 671-amino-acid chain; its full sequence is DNA ligase (671 aa).

Residues Asp-37–Asp-41, Ser-86–Leu-87, and Glu-117 each bind NAD(+). Residue Lys-119 is the N6-AMP-lysine intermediate of the active site. NAD(+)-binding residues include Arg-140, Glu-177, Lys-295, and Lys-319. Zn(2+)-binding residues include Cys-413, Cys-416, Cys-431, and Cys-437. Residues Ile-594–Lys-671 form the BRCT domain.

This sequence belongs to the NAD-dependent DNA ligase family. LigA subfamily. It depends on Mg(2+) as a cofactor. Requires Mn(2+) as cofactor.

It catalyses the reaction NAD(+) + (deoxyribonucleotide)n-3'-hydroxyl + 5'-phospho-(deoxyribonucleotide)m = (deoxyribonucleotide)n+m + AMP + beta-nicotinamide D-nucleotide.. In terms of biological role, DNA ligase that catalyzes the formation of phosphodiester linkages between 5'-phosphoryl and 3'-hydroxyl groups in double-stranded DNA using NAD as a coenzyme and as the energy source for the reaction. It is essential for DNA replication and repair of damaged DNA. In Polynucleobacter asymbioticus (strain DSM 18221 / CIP 109841 / QLW-P1DMWA-1) (Polynucleobacter necessarius subsp. asymbioticus), this protein is DNA ligase.